The primary structure comprises 542 residues: Polysialoglycoprotein (542 aa).

Positions 1–21 (MIMGGVRELLLVVMTVGVVKV) are cleaved as a signal peptide. Residues 22–120 (SCYPVGKSQK…TSEAATGPSG (99 aa)) constitute a propeptide that is removed on maturation. The segment at 70-542 (EEYLETNEVE…GPSGDDAMDI (473 aa)) is disordered. The segment covering 78–95 (VESQASPNHGSSPANDAL) has biased composition (polar residues). Residues 97–106 (SEEKLRRVSS) show a composition bias toward basic and acidic residues. Residues 107–116 (DDAATSEAAT) show a composition bias toward low complexity. Repeat copies occupy residues 121-133 (DDAT…GPSG), 134-146 (DDAT…GPSG), 147-159 (DDAT…GPSG), 160-172 (DDAT…GPSG), 173-185 (DDAT…GPSG), 186-198 (DDAT…GPSG), 199-211 (DDAT…GPSG), 212-224 (DDAT…GPSG), 225-237 (DDAT…GPSG), 238-250 (DDAT…GPSG), 251-263 (DDAT…GPSG), 264-276 (DDAT…GPSG), 277-289 (DDAT…GPSG), 290-302 (DDAT…GPSG), 303-315 (DDAT…GPSG), 316-328 (DDAT…GPSG), 329-341 (DDAT…GPSG), 342-354 (DDAT…GPSG), 355-367 (DDAT…GPSG), 368-380 (DDAT…GPSG), 381-393 (DDAT…GPSG), 394-406 (DDAT…GPSG), 407-419 (DDAT…GPSG), 420-432 (DDAT…GPSG), 433-445 (DDAT…GPSG), 446-458 (DDAT…GPSG), 459-471 (DDAT…GPSG), 472-484 (DDAT…GPSG), 485-497 (DDAT…GPSG), 498-510 (DDAT…GPSG), 511-523 (DDAT…GPSG), and 524-536 (DDAT…GPSG). The tract at residues 121–536 (DDATSEAATG…TSEAATGPSG (416 aa)) is 32 X 13 AA tandem repeats of D-D-A-T-S-E-A-A-T-G-P-S-G. An O-linked (GalNAc...) threonine glycan is attached at Thr124. The O-linked (GalNAc...) serine glycan is linked to Ser125. O-linked (GalNAc...) threonine glycans are attached at residues Thr129 and Thr137. An O-linked (GalNAc...) serine glycan is attached at Ser138. O-linked (GalNAc...) threonine glycosylation is found at Thr142 and Thr150. The O-linked (GalNAc...) serine glycan is linked to Ser151. 2 O-linked (GalNAc...) threonine glycosylation sites follow: Thr155 and Thr163. A glycan (O-linked (GalNAc...) serine) is linked at Ser164. Thr168 and Thr176 each carry an O-linked (GalNAc...) threonine glycan. O-linked (GalNAc...) serine glycosylation occurs at Ser177. 2 O-linked (GalNAc...) threonine glycosylation sites follow: Thr181 and Thr189. Residue Ser190 is glycosylated (O-linked (GalNAc...) serine). 2 O-linked (GalNAc...) threonine glycosylation sites follow: Thr194 and Thr202. O-linked (GalNAc...) serine glycosylation is present at Ser203. 2 O-linked (GalNAc...) threonine glycosylation sites follow: Thr207 and Thr215. Ser216 carries O-linked (GalNAc...) serine glycosylation. 2 O-linked (GalNAc...) threonine glycosylation sites follow: Thr220 and Thr228. The O-linked (GalNAc...) serine glycan is linked to Ser229. 2 O-linked (GalNAc...) threonine glycosylation sites follow: Thr233 and Thr241. Residue Ser242 is glycosylated (O-linked (GalNAc...) serine). O-linked (GalNAc...) threonine glycosylation is found at Thr246 and Thr254. Ser255 carries an O-linked (GalNAc...) serine glycan. O-linked (GalNAc...) threonine glycosylation is found at Thr259 and Thr267. A glycan (O-linked (GalNAc...) serine) is linked at Ser268. Thr272 and Thr280 each carry an O-linked (GalNAc...) threonine glycan. O-linked (GalNAc...) serine glycosylation is present at Ser281. Thr285 and Thr293 each carry an O-linked (GalNAc...) threonine glycan. Ser294 is a glycosylation site (O-linked (GalNAc...) serine). O-linked (GalNAc...) threonine glycosylation is found at Thr298 and Thr306. O-linked (GalNAc...) serine glycosylation is present at Ser307. Thr311 and Thr319 each carry an O-linked (GalNAc...) threonine glycan. An O-linked (GalNAc...) serine glycan is attached at Ser320. O-linked (GalNAc...) threonine glycans are attached at residues Thr324 and Thr332. Ser333 carries O-linked (GalNAc...) serine glycosylation. 2 O-linked (GalNAc...) threonine glycosylation sites follow: Thr337 and Thr345. A glycan (O-linked (GalNAc...) serine) is linked at Ser346. Residues Thr350 and Thr358 are each glycosylated (O-linked (GalNAc...) threonine). The O-linked (GalNAc...) serine glycan is linked to Ser359. Thr363 and Thr371 each carry an O-linked (GalNAc...) threonine glycan. O-linked (GalNAc...) serine glycosylation is present at Ser372. O-linked (GalNAc...) threonine glycans are attached at residues Thr376 and Thr384. O-linked (GalNAc...) serine glycosylation is present at Ser385. Thr389 and Thr397 each carry an O-linked (GalNAc...) threonine glycan. Ser398 carries O-linked (GalNAc...) serine glycosylation. O-linked (GalNAc...) threonine glycans are attached at residues Thr402 and Thr410. Ser411 carries O-linked (GalNAc...) serine glycosylation. 2 O-linked (GalNAc...) threonine glycosylation sites follow: Thr415 and Thr423. O-linked (GalNAc...) serine glycosylation occurs at Ser424. O-linked (GalNAc...) threonine glycans are attached at residues Thr428 and Thr436. Ser437 carries O-linked (GalNAc...) serine glycosylation. 2 O-linked (GalNAc...) threonine glycosylation sites follow: Thr441 and Thr449. O-linked (GalNAc...) serine glycosylation is present at Ser450. Residues Thr454 and Thr462 are each glycosylated (O-linked (GalNAc...) threonine). O-linked (GalNAc...) serine glycosylation occurs at Ser463. Residues Thr467 and Thr475 are each glycosylated (O-linked (GalNAc...) threonine). Ser476 carries O-linked (GalNAc...) serine glycosylation. O-linked (GalNAc...) threonine glycosylation is found at Thr480 and Thr488. A glycan (O-linked (GalNAc...) serine) is linked at Ser489. 2 O-linked (GalNAc...) threonine glycosylation sites follow: Thr493 and Thr501. O-linked (GalNAc...) serine glycosylation occurs at Ser502. Thr506 and Thr514 each carry an O-linked (GalNAc...) threonine glycan. An O-linked (GalNAc...) serine glycan is attached at Ser515. Residues Thr519 and Thr527 are each glycosylated (O-linked (GalNAc...) threonine). The O-linked (GalNAc...) serine glycan is linked to Ser528. Thr532 carries O-linked (GalNAc...) threonine glycosylation. The propeptide occupies 537-542 (DDAMDI).

Most sialic acid residues exist in the form of polysialyl groups partly capped with deaminoneuraminic acid. As to expression, cortical alveoli of immature ovaries.

In response to egg activation, PSGP is discharged by exocytosis into the perivitelline space, where it undergoes rapid proteolysis into glycotridecapeptides. During fertilization and/or early development the glycotridecapeptides prevent polyspermy or are involved in the formation of a fertilization membrane. This is Polysialoglycoprotein from Oncorhynchus mykiss (Rainbow trout).